A 170-amino-acid chain; its full sequence is MTPLIFASEGFGLNLNIFETNIINLAVVVFGLYKFLPGFLGKILEKRRTTILSDLKEAEERLAQAQDSLSQAKDDLSSAKQKADKIRNDCKVRAEAIRLESEKRTVEEMARIKQGAASDLSAEAARVTSQLRKEAAELAIEKALAMLPKKLDSNTQDNFLKQSIKNIGDN.

The helical transmembrane segment at 22–44 threads the bilayer; that stretch reads IINLAVVVFGLYKFLPGFLGKIL.

It belongs to the ATPase B chain family. As to quaternary structure, F-type ATPases have 2 components, F(1) - the catalytic core - and F(0) - the membrane proton channel. F(1) has five subunits: alpha(3), beta(3), gamma(1), delta(1), epsilon(1). F(0) has four main subunits: a(1), b(1), b'(1) and c(10-14). The alpha and beta chains form an alternating ring which encloses part of the gamma chain. F(1) is attached to F(0) by a central stalk formed by the gamma and epsilon chains, while a peripheral stalk is formed by the delta, b and b' chains.

It is found in the cellular thylakoid membrane. In terms of biological role, f(1)F(0) ATP synthase produces ATP from ADP in the presence of a proton or sodium gradient. F-type ATPases consist of two structural domains, F(1) containing the extramembraneous catalytic core and F(0) containing the membrane proton channel, linked together by a central stalk and a peripheral stalk. During catalysis, ATP synthesis in the catalytic domain of F(1) is coupled via a rotary mechanism of the central stalk subunits to proton translocation. Functionally, component of the F(0) channel, it forms part of the peripheral stalk, linking F(1) to F(0). The protein is ATP synthase subunit b of Prochlorococcus marinus (strain NATL1A).